We begin with the raw amino-acid sequence, 598 residues long: Protein HIGH CHLOROPHYLL FLUORESCENCE PHENOTYPE 173, chloroplastic (598 aa).

A chloroplast-targeting transit peptide spans 1 to 79 (MVGSIVGSNM…ITTKESEETV (79 aa)). The tract at residues 42–106 (VIPRAQSSSS…PTLKLDDVNP (65 aa)) is disordered. Residues 73–84 (KESEETVAKKLD) are compositionally biased toward basic and acidic residues. The span at 87 to 97 (PPSPQSPPSPP) shows a compositional bias: pro residues.

It belongs to the NmrA-type oxidoreductase family. In terms of assembly, component of a high molecular weight complex containing psbA mRNA, OHP1, OHP2 and HCF244, and PSII core proteins D1/D2, HCF136 and HCF173. Interacts with LPE1.

The protein resides in the plastid. Its subcellular location is the chloroplast membrane. It localises to the chloroplast thylakoid membrane. It is found in the chloroplast stroma. Its function is as follows. Auxiliary factor required, together with HCF244, for the biogenesis of photosystem II (PSII), especially for the synthesis of the reaction center proteins (e.g. D1), via the regulation of the corresponding mRNA (e.g. psbA) translation initiation (ribosomal loading) and stabilization. This is Protein HIGH CHLOROPHYLL FLUORESCENCE PHENOTYPE 173, chloroplastic from Arabidopsis thaliana (Mouse-ear cress).